The chain runs to 402 residues: Cysteine-rich venom protein (402 aa).

The N-terminal stretch at 1–13 (MNLALFIIFATIF) is a signal peptide. The 143-residue stretch at 57-199 (LETHNQLRNK…VKKVLYTCNY (143 aa)) folds into the SCP domain.

The protein belongs to the CRISP family. In terms of processing, contains 7 disulfide bonds. As to expression, expressed by the venom gland.

It is found in the secreted. The chain is Cysteine-rich venom protein from Tityus serrulatus (Brazilian scorpion).